Consider the following 494-residue polypeptide: UPF0371 protein SEQ_1471 (494 aa).

It belongs to the UPF0371 family.

This is UPF0371 protein SEQ_1471 from Streptococcus equi subsp. equi (strain 4047).